Reading from the N-terminus, the 405-residue chain is Phosphopentomutase (405 aa).

6 residues coordinate Mn(2+): aspartate 10, aspartate 305, histidine 310, aspartate 346, histidine 347, and histidine 358.

It belongs to the phosphopentomutase family. Requires Mn(2+) as cofactor.

It localises to the cytoplasm. It catalyses the reaction 2-deoxy-alpha-D-ribose 1-phosphate = 2-deoxy-D-ribose 5-phosphate. The enzyme catalyses alpha-D-ribose 1-phosphate = D-ribose 5-phosphate. It participates in carbohydrate degradation; 2-deoxy-D-ribose 1-phosphate degradation; D-glyceraldehyde 3-phosphate and acetaldehyde from 2-deoxy-alpha-D-ribose 1-phosphate: step 1/2. Functionally, isomerase that catalyzes the conversion of deoxy-ribose 1-phosphate (dRib-1-P) and ribose 1-phosphate (Rib-1-P) to deoxy-ribose 5-phosphate (dRib-5-P) and ribose 5-phosphate (Rib-5-P), respectively. In Methylobacterium sp. (strain 4-46), this protein is Phosphopentomutase.